A 563-amino-acid chain; its full sequence is Putative transporter arsB (563 aa).

Residues 1–26 (MIDINSSSSSSSSNNNNSNNNNNNNN) are disordered. Helical transmembrane passes span 35-55 (INSS…LIFI), 67-87 (PIGR…FGII), 91-111 (EIGS…MMLS), 176-196 (FFPF…ALPV), and 218-238 (VSIV…LLYF). The span at 262–271 (EIDNNHHDDD) shows a compositional bias: basic and acidic residues. The interval 262 to 284 (EIDNNHHDDDGANNQSKNEKEME) is disordered. Residues 273 to 303 (ANNQSKNEKEMENINKEVEEEQHNNDDDDDD) are a coiled coil. 5 consecutive transmembrane segments (helical) span residues 376–396 (IILT…FTVL), 413–433 (IINS…VLVE), 463–483 (IFIF…VPLV), 500–520 (WILL…GSVA), and 542–562 (FGVP…VLIG).

Belongs to the CitM (TC 2.A.11) transporter family.

The protein localises to the cell membrane. The protein is Putative transporter arsB (arsB) of Dictyostelium discoideum (Social amoeba).